Here is a 586-residue protein sequence, read N- to C-terminus: MTSFSLTFTSPLLPSSSTKPKRSVLVAAAQTTAPAESTASVDADRLEPRVELKDGFFILKEKFRKGINPQEKVKIEREPMKLFMENGIEELAKKSMEELDSEKSSKDDIDVRLKWLGLFHRRKHQYGKFMMRLKLPNGVTTSAQTRYLASVIRKYGEDGCADVTTRQNWQIRGVVLPDVPEILKGLASVGLTSLQSGMDNVRNPVGNPIAGIDPEEIVDTRPYTNLLSQFITANSQGNPDFTNLPRKWNVCVVGTHDLYEHPHINDLAYMPANKDGRFGFNLLVGGFFSPKRCEEAIPLDAWVPADDVLPLCKAVLEAYRDLGTRGNRQKTRMMWLIDELGVEGFRTEVEKRMPNGKLERGSSEDLVNKQWERRDYFGVNPQKQEGLSFVGLHVPVGRLQADDMDELARLADTYGSGELRLTVEQNIIIPNVETSKTEALLQEPFLKNRFSPEPSILMKGLVACTGSQFCGQAIIETKLRALKVTEEVERLVSVPRPIRMHWTGCPNTCGQVQVADIGFMGCLTRGEEGKPVEGADVYVGGRIGSDSHIGEIYKKGVRVTELVPLVAEILIKEFGAVPREREENED.

Over residues 1-18 (MTSFSLTFTSPLLPSSST) the composition is skewed to low complexity. The disordered stretch occupies residues 1–20 (MTSFSLTFTSPLLPSSSTKP). The N-terminal 25 residues, 1 to 25 (MTSFSLTFTSPLLPSSSTKPKRSVL), are a transit peptide targeting the chloroplast. K103 participates in a covalent cross-link: Glycyl lysine isopeptide (Lys-Gly) (interchain with G-Cter in ubiquitin). The [4Fe-4S] cluster site is built by C464, C470, C505, and C509. A siroheme-binding site is contributed by C509.

Belongs to the nitrite and sulfite reductase 4Fe-4S domain family. As to quaternary structure, monomer. Siroheme is required as a cofactor. Requires [4Fe-4S] cluster as cofactor.

Its subcellular location is the plastid. The protein resides in the chloroplast. The enzyme catalyses 6 oxidized [2Fe-2S]-[ferredoxin] + NH4(+) + 2 H2O = nitrite + 6 reduced [2Fe-2S]-[ferredoxin] + 8 H(+). It functions in the pathway nitrogen metabolism; nitrate reduction (assimilation). Catalyzes the six-electron reduction of nitrite to ammonium. The chain is Ferredoxin--nitrite reductase, chloroplastic (NIR1) from Arabidopsis thaliana (Mouse-ear cress).